A 2282-amino-acid polypeptide reads, in one-letter code: Acetyl-CoA carboxylase (2282 aa).

The Biotin carboxylation domain occupies 16–515 (NIEKILIANN…HTGWLDQLIS (500 aa)). The ATP-grasp domain occupies 170-360 (YSECNGVPSE…LPATQLQIAM (191 aa)). 196–253 (AQRVGFPAMIKASEGGGGKGIRKVTSMEDLESSFRQVQNEVPGSPIFFMKLVSNARHL) lines the ATP pocket. 3 residues coordinate Mn(2+): Glu-319, Glu-331, and Asn-333. Arg-335 is a catalytic residue. The region spanning 646–720 (FSQEYDPSIL…APGAIIANLE (75 aa)) is the Biotinyl-binding domain. Lys-687 bears the N6-biotinyllysine mark. Over residues 1109–1129 (GSNSGSPTYGSPLIRSISSSG) the composition is skewed to low complexity. A disordered region spans residues 1109-1141 (GSNSGSPTYGSPLIRSISSSGGSSGGSGFQISP). The CoA carboxyltransferase N-terminal domain occupies 1495-1851 (PYPIMDAVQR…SGGEMVPIIS (357 aa)). Residues 1495–2178 (PYPIMDAVQR…EEDKLKLIDK (684 aa)) are carboxyltransferase. Residues Arg-1761, Lys-2068, and Arg-2070 each contribute to the CoA site. Positions 1852–2178 (PIDSPHRDIE…EEDKLKLIDK (327 aa)) constitute a CoA carboxyltransferase C-terminal domain.

It depends on biotin as a cofactor. Requires Mn(2+) as cofactor.

The protein localises to the cytoplasm. The catalysed reaction is hydrogencarbonate + acetyl-CoA + ATP = malonyl-CoA + ADP + phosphate + H(+). The enzyme catalyses N(6)-biotinyl-L-lysyl-[protein] + hydrogencarbonate + ATP = N(6)-carboxybiotinyl-L-lysyl-[protein] + ADP + phosphate + H(+). It participates in lipid metabolism; malonyl-CoA biosynthesis; malonyl-CoA from acetyl-CoA: step 1/1. Functionally, catalyzes the rate-limiting reaction in the biogenesis of long-chain fatty acids. Carries out three functions: biotin carboxyl carrier protein, biotin carboxylase and carboxyltransferase. This chain is Acetyl-CoA carboxylase (accA), found in Dictyostelium discoideum (Social amoeba).